Reading from the N-terminus, the 419-residue chain is tRNA(Met) cytidine acetate ligase (419 aa).

ATP-binding positions include 7 to 20 (ITEY…HLHH), G101, N163, and R188.

Belongs to the TmcAL family.

The protein resides in the cytoplasm. It catalyses the reaction cytidine(34) in elongator tRNA(Met) + acetate + ATP = N(4)-acetylcytidine(34) in elongator tRNA(Met) + AMP + diphosphate. Functionally, catalyzes the formation of N(4)-acetylcytidine (ac(4)C) at the wobble position of elongator tRNA(Met), using acetate and ATP as substrates. First activates an acetate ion to form acetyladenylate (Ac-AMP) and then transfers the acetyl group to tRNA to form ac(4)C34. The polypeptide is tRNA(Met) cytidine acetate ligase (Syntrophotalea carbinolica (strain DSM 2380 / NBRC 103641 / GraBd1) (Pelobacter carbinolicus)).